The chain runs to 848 residues: Transforming growth factor beta receptor type 3 (848 aa).

Positions M1–A20 are cleaved as a signal peptide. Residues G21 to V784 are Extracellular-facing. Residues N34 and N141 are each glycosylated (N-linked (GlcNAc...) asparagine). A disulfide bridge links C52 with C197. Residues S390–D448 are disordered. Residues G411 to D425 show a composition bias toward basic and acidic residues. Residues R454–C729 form the ZP domain. N-linked (GlcNAc...) asparagine glycosylation occurs at N491. 3 O-linked (Xyl...) (glycosaminoglycan) serine glycosylation sites follow: S529, S533, and S544. 3 N-linked (GlcNAc...) asparagine glycosylation sites follow: N570, N589, and N696. Cystine bridges form between C638–C704, C659–C729, and C709–C722. The interval M736–P750 is interaction with TGF-beta ligand. Residues M785–Y806 traverse the membrane as a helical segment. Over S807–A848 the chain is Cytoplasmic. The tract at residues A813 to A848 is disordered. A compositionally biased stretch (low complexity) spans S833 to A848. A Phosphothreonine modification is found at T837.

As to quaternary structure, forms homodimers and homooligomers. Interacts with DYNLT4. Interacts with integrin ITGA5:ITGB1; this interaction promotes the internalization and trafficking of ITGA5:ITGB1 into endocytic vesicles. Interacts with TGFB1, BMP2, BMP5, BMP7 or GDF5 and inhibin A via the ligand binding domains. Interacts with ALK3/BMPR1A; this interaction results in the cell surface retention of BMPR1A. Interacts with ALK6/BMPR1B; this interaction enhances BMPR1B-mediated stimulation of the BMP signaling pathway. Interacts with the scaffolding protein beta-arrestin2/ARRB2; this interaction mediates internalization of TGFBR3 and thus regulates migration, actin cytoskeleton and activation of CDC42. Post-translationally, extensively modified by glycosaminoglycan groups (GAG). Phosphorylated in the cytoplasmic domain by the type II receptor TGFBR2 at THR-837 to mediate recruitment of ARRB2 and subsequent internalization of TGFBR2 and TGFBR3.

Its subcellular location is the cell membrane. It localises to the secreted. The protein localises to the extracellular space. It is found in the extracellular matrix. Its function is as follows. Cell surface receptor that regulates diverse cellular processes including cell proliferation, differentiation, migration, and apoptosis. Initiates BMP, inhibin, and TGF-beta signaling pathways by interacting with different ligands including TGFB1, BMP2, BMP5, BMP7 or GDF5. Alternatively, acts as a cell surface coreceptor for BMP ligands, serving to enhance ligand binding by differentially regulating BMPR1A/ALK3 and BMPR1B/ALK6 receptor trafficking. Promotes epithelial cell adhesion, focal adhesion formation and integrin signaling during epithelial cell spreading on fibronectin. By interacting with the scaffolding protein beta-arrestin2/ARRB2, regulates migration or actin cytoskeleton and promotes the activation of CDC42 as well as the inhibition of NF-kappa-B. In gonadotrope cells, acts as an inhibin A coreceptor and regulates follicle-stimulating hormone (FSH) levels and female fertility. Plays a role in the inhibition of directed and random cell migration in epithelial cells by altering the actin cytoskeletal organization. Participates in epithelial-mesenchymal transformation (EMT) upon binding to BMP2 or TGFB2, by activating the PAR6/SMURF1/RHOA pathway. The polypeptide is Transforming growth factor beta receptor type 3 (TGFBR3) (Sus scrofa (Pig)).